Reading from the N-terminus, the 119-residue chain is DNA-binding protein MmarC7_1157 (119 aa).

The span at 1-12 shows a compositional bias: basic and acidic residues; that stretch reads MNPEEIRQRRLQ. The interval 1 to 37 is disordered; it reads MNPEEIRQRRLQEMQAKAQEQGAANDPEAQRQAQEQQ.

This sequence belongs to the PDCD5 family.

The sequence is that of DNA-binding protein MmarC7_1157 from Methanococcus maripaludis (strain C7 / ATCC BAA-1331).